Reading from the N-terminus, the 203-residue chain is Small ribosomal subunit protein uS5 (203 aa).

The segment covering 1-18 (MENNVKKETIVDSEKVEK) has biased composition (basic and acidic residues). Positions 1–36 (MENNVKKETIVDSEKVEKQQPVTAPVVNKKENTQPK) are disordered. The S5 DRBM domain maps to 49 to 112 (FEERVVKIKR…KNANNNLIKV (64 aa)).

This sequence belongs to the universal ribosomal protein uS5 family. In terms of assembly, part of the 30S ribosomal subunit. Contacts proteins S4 and S8.

Its function is as follows. With S4 and S12 plays an important role in translational accuracy. Functionally, located at the back of the 30S subunit body where it stabilizes the conformation of the head with respect to the body. The chain is Small ribosomal subunit protein uS5 from Ureaplasma urealyticum serovar 10 (strain ATCC 33699 / Western).